Consider the following 127-residue polypeptide: Major sperm protein 49 (127 aa).

An N-acetylalanine modification is found at Ala2. An MSP domain is found at 9–126 (DIQTQPGTKI…RRKNLPIEYN (118 aa)).

Sperm.

It is found in the cell projection. The protein resides in the pseudopodium. It localises to the cytoplasm. The protein localises to the cytoskeleton. Central component in molecular interactions underlying sperm crawling. Forms an extensive filament system that extends from sperm villipoda, along the leading edge of the pseudopod. The polypeptide is Major sperm protein 49 (msp-49) (Caenorhabditis elegans).